The chain runs to 207 residues: MASVSPLAKYKLVFLGDQSVGKTSIITRFMYDKFDTTYQATIGIDFLSKTMYLEDRTVRLQLWDTAGQERFRSLIPSYIRDSSVAVIVYDVANRQSFLNTSKWIEDVRTERGSDVIIVLVGNKTDLVDKRQVSIEEGDNKARDYGVIFIETSAKAGFNIKPLFRKIAAALPGMETLSSTKQEDMVDVNLKTSSNSAQGEQQRGGCAC.

Residue G16 to T23 participates in GTP binding. Positions Y38–F46 match the Effector region motif. GTP is bound by residues D64 to Q68, N122 to D125, and S152 to A153. Residues C205 and C207 are each lipidated (S-geranylgeranyl cysteine). C207 is subject to Cysteine methyl ester.

The protein belongs to the small GTPase superfamily. Rab family.

It localises to the golgi apparatus membrane. Its function is as follows. Protein transport. Regulator of membrane traffic from the Golgi apparatus towards the endoplasmic reticulum (ER). The sequence is that of Ras-related protein RABH1e (RABH1E) from Arabidopsis thaliana (Mouse-ear cress).